The following is a 157-amino-acid chain: Small ribosomal subunit protein uS7 (157 aa).

The protein belongs to the universal ribosomal protein uS7 family. In terms of assembly, part of the 30S ribosomal subunit. Contacts proteins S9 and S11.

Its function is as follows. One of the primary rRNA binding proteins, it binds directly to 16S rRNA where it nucleates assembly of the head domain of the 30S subunit. Is located at the subunit interface close to the decoding center, probably blocks exit of the E-site tRNA. In Borreliella burgdorferi (strain ATCC 35210 / DSM 4680 / CIP 102532 / B31) (Borrelia burgdorferi), this protein is Small ribosomal subunit protein uS7.